A 113-amino-acid chain; its full sequence is Hydrogenase maturation factor HypA (113 aa).

A Ni(2+)-binding site is contributed by histidine 2. The Zn(2+) site is built by cysteine 73, cysteine 76, cysteine 89, and cysteine 92.

Belongs to the HypA/HybF family.

Functionally, involved in the maturation of [NiFe] hydrogenases. Required for nickel insertion into the metal center of the hydrogenase. The chain is Hydrogenase maturation factor HypA from Methylocella silvestris (strain DSM 15510 / CIP 108128 / LMG 27833 / NCIMB 13906 / BL2).